The following is a 524-amino-acid chain: Keratin, type II cytoskeletal 71 (524 aa).

Residues 1–130 form a head region; sequence MSRQFTCKSG…DPEIQKVRAQ (130 aa). A coil 1A region spans residues 131–166; the sequence is EREQIKALNNKFASFIDKVRFLEQQNQVLQTKWELL. One can recognise an IF rod domain in the interval 131–444; the sequence is EREQIKALNN…KLLESEECRM (314 aa). Residues 167–185 form a linker 1 region; it reads QQLDLNNCKNNLEPILEGH. Residues 186 to 277 are coil 1B; sequence ISNMRKQLET…CLFEAEMAQI (92 aa). Positions 278–301 are linker 12; the sequence is QSHISDMSVILSMDNNRNLDLDSI. Residues 302 to 440 are coil 2; sequence IDEVRAQYEE…ATYRKLLESE (139 aa). The tail stretch occupies residues 441–524; sequence ECRMSGEYSS…LSTPSKKGGR (84 aa). A disordered region spans residues 493–524; it reads GGENRSRGSASDYKDTLTKGSSLSTPSKKGGR. The segment covering 494–509 has biased composition (basic and acidic residues); it reads GENRSRGSASDYKDTL. The span at 510–524 shows a compositional bias: polar residues; it reads TKGSSLSTPSKKGGR.

It belongs to the intermediate filament family. Heterodimer of a type I and a type II keratin. Associates with KRT16 and/or KRT17. Specifically expressed in the inner root sheath (IRS) of the hair follicle. Present in Henle and the Huxley layers of the IRS, while expression in the cuticle is unsure (at protein level).

The protein resides in the cytoplasm. Its subcellular location is the cytoskeleton. Functionally, plays a central role in hair formation. Essential component of keratin intermediate filaments in the inner root sheath (IRS) of the hair follicle. The polypeptide is Keratin, type II cytoskeletal 71 (Krt71) (Mus musculus (Mouse)).